We begin with the raw amino-acid sequence, 473 residues long: Photosystem II CP43 reaction center protein (473 aa).

Residues 1–14 (MKTLYSLRRFYHVE) constitute a propeptide that is removed on maturation. N-acetylthreonine is present on Thr-15. Phosphothreonine is present on Thr-15. 5 consecutive transmembrane segments (helical) span residues 69 to 93 (LFEV…PHLA), 134 to 155 (LLGP…KDRN), 178 to 200 (KALY…RKIT), 255 to 275 (KPFA…LSYS), and 291 to 312 (WFNN…ASQA). Glu-367 lines the [CaMn4O5] cluster pocket. Residues 447-471 (RARAAAAGFEKGIDRDFEPVLSMTP) form a helical membrane-spanning segment.

Belongs to the PsbB/PsbC family. PsbC subfamily. As to quaternary structure, PSII is composed of 1 copy each of membrane proteins PsbA, PsbB, PsbC, PsbD, PsbE, PsbF, PsbH, PsbI, PsbJ, PsbK, PsbL, PsbM, PsbT, PsbX, PsbY, PsbZ, Psb30/Ycf12, at least 3 peripheral proteins of the oxygen-evolving complex and a large number of cofactors. It forms dimeric complexes. The cofactor is Binds multiple chlorophylls and provides some of the ligands for the Ca-4Mn-5O cluster of the oxygen-evolving complex. It may also provide a ligand for a Cl- that is required for oxygen evolution. PSII binds additional chlorophylls, carotenoids and specific lipids..

Its subcellular location is the plastid. It localises to the chloroplast thylakoid membrane. In terms of biological role, one of the components of the core complex of photosystem II (PSII). It binds chlorophyll and helps catalyze the primary light-induced photochemical processes of PSII. PSII is a light-driven water:plastoquinone oxidoreductase, using light energy to abstract electrons from H(2)O, generating O(2) and a proton gradient subsequently used for ATP formation. This chain is Photosystem II CP43 reaction center protein, found in Aethionema cordifolium (Lebanon stonecress).